Reading from the N-terminus, the 152-residue chain is Lipoprotein signal peptidase (152 aa).

The next 3 membrane-spanning stretches (helical) occupy residues 5 to 25 (LFVL…FWIV), 61 to 81 (WFFV…LATH), and 84 to 104 (LNIW…GNFI). Active-site residues include Asp114 and Asp130. The helical transmembrane segment at 125–145 (IFNVADSYLTVGVILLVICLW) threads the bilayer.

Belongs to the peptidase A8 family.

It is found in the cell membrane. It carries out the reaction Release of signal peptides from bacterial membrane prolipoproteins. Hydrolyzes -Xaa-Yaa-Zaa-|-(S,diacylglyceryl)Cys-, in which Xaa is hydrophobic (preferably Leu), and Yaa (Ala or Ser) and Zaa (Gly or Ala) have small, neutral side chains.. It participates in protein modification; lipoprotein biosynthesis (signal peptide cleavage). In terms of biological role, this protein specifically catalyzes the removal of signal peptides from prolipoproteins. The sequence is that of Lipoprotein signal peptidase from Streptococcus pyogenes serotype M6 (strain ATCC BAA-946 / MGAS10394).